The following is a 476-amino-acid chain: Probable cytosol aminopeptidase (476 aa).

Mn(2+) is bound by residues Lys242 and Asp247. Lys254 is an active-site residue. The Mn(2+) site is built by Asp265, Asp324, and Glu326. The active site involves Arg328.

The protein belongs to the peptidase M17 family. Requires Mn(2+) as cofactor.

The protein localises to the cytoplasm. The enzyme catalyses Release of an N-terminal amino acid, Xaa-|-Yaa-, in which Xaa is preferably Leu, but may be other amino acids including Pro although not Arg or Lys, and Yaa may be Pro. Amino acid amides and methyl esters are also readily hydrolyzed, but rates on arylamides are exceedingly low.. It carries out the reaction Release of an N-terminal amino acid, preferentially leucine, but not glutamic or aspartic acids.. Its function is as follows. Presumably involved in the processing and regular turnover of intracellular proteins. Catalyzes the removal of unsubstituted N-terminal amino acids from various peptides. The sequence is that of Probable cytosol aminopeptidase from Treponema denticola (strain ATCC 35405 / DSM 14222 / CIP 103919 / JCM 8153 / KCTC 15104).